The chain runs to 683 residues: Probable serine/threonine-protein kinase HAL5-like (683 aa).

2 disordered regions span residues 1-90 (MPQQ…VSDE) and 157-200 (YPQN…SKKA). The segment covering 36-48 (PSSAATSDSSEMS) has biased composition (low complexity). Over residues 50 to 60 (AQGGRGNGLLG) the composition is skewed to gly residues. Residues 69 to 85 (SPKSEAQFTQRNKSAES) are compositionally biased toward polar residues. The region spanning 364 to 670 (GKCIGMIGQG…IPKLLDTPWM (307 aa)) is the Protein kinase domain. ATP contacts are provided by residues 370–378 (IGQGAYGTV) and Lys-411. Asp-521 acts as the Proton acceptor in catalysis.

The protein belongs to the protein kinase superfamily. CAMK Ser/Thr protein kinase family. NPR/HAL subfamily. HAL5 sub-subfamily.

The catalysed reaction is L-seryl-[protein] + ATP = O-phospho-L-seryl-[protein] + ADP + H(+). It catalyses the reaction L-threonyl-[protein] + ATP = O-phospho-L-threonyl-[protein] + ADP + H(+). This Eremothecium gossypii (strain ATCC 10895 / CBS 109.51 / FGSC 9923 / NRRL Y-1056) (Yeast) protein is Probable serine/threonine-protein kinase HAL5-like.